The primary structure comprises 308 residues: MRKLVVGSRRSKLALTQSRQFIDKLKAIDPSLEIEIKEIVTKGDLIVDKQLSKVGGKGLFVKEIQNELFNHGIDMAIHSLKDVPSVIPDGLTLGCIPDRENPYDAYIAKNHVPLNELPDNSIVGTSSLRRGAQILAKYPKLQIKWIRGNIDTRLNKLETEDYDAIILAAAGLKRMGWSDDIVTSYLDKETLIPAIGQGALGIECRSDDETLLSLLSKVHNQDVADCVTAERTFLTRMNGSCQVPIGGYATKEADGTIEFTGLIMSPDGKERYQHTVRGTDPVALGEEVTKVLNEQGAYEIIKALNEEQ.

Cysteine 241 carries the S-(dipyrrolylmethanemethyl)cysteine modification.

The protein belongs to the HMBS family. In terms of assembly, monomer. Dipyrromethane is required as a cofactor.

It catalyses the reaction 4 porphobilinogen + H2O = hydroxymethylbilane + 4 NH4(+). Its pathway is porphyrin-containing compound metabolism; protoporphyrin-IX biosynthesis; coproporphyrinogen-III from 5-aminolevulinate: step 2/4. In terms of biological role, tetrapolymerization of the monopyrrole PBG into the hydroxymethylbilane pre-uroporphyrinogen in several discrete steps. This Staphylococcus saprophyticus subsp. saprophyticus (strain ATCC 15305 / DSM 20229 / NCIMB 8711 / NCTC 7292 / S-41) protein is Porphobilinogen deaminase.